Reading from the N-terminus, the 195-residue chain is Phosphoheptose isomerase (195 aa).

The SIS domain occupies 36–195 (LVDSLKGDGI…IIEKELFGLD (160 aa)). 51–53 (NGG) contacts substrate. Positions 60 and 64 each coordinate Zn(2+). Substrate is bound by residues glutamate 64, 95–96 (ND), 121–123 (TTS), serine 126, and glutamine 173. Zn(2+)-binding residues include glutamine 173 and histidine 181.

The protein belongs to the SIS family. GmhA subfamily. Zn(2+) is required as a cofactor.

It localises to the cytoplasm. The enzyme catalyses 2 D-sedoheptulose 7-phosphate = D-glycero-alpha-D-manno-heptose 7-phosphate + D-glycero-beta-D-manno-heptose 7-phosphate. Its pathway is carbohydrate biosynthesis; D-glycero-D-manno-heptose 7-phosphate biosynthesis; D-glycero-alpha-D-manno-heptose 7-phosphate and D-glycero-beta-D-manno-heptose 7-phosphate from sedoheptulose 7-phosphate: step 1/1. Catalyzes the isomerization of sedoheptulose 7-phosphate in D-glycero-D-manno-heptose 7-phosphate. The polypeptide is Phosphoheptose isomerase (Leptospira biflexa serovar Patoc (strain Patoc 1 / Ames)).